The primary structure comprises 103 residues: Co-chaperonin GroES (103 aa).

The protein belongs to the GroES chaperonin family. As to quaternary structure, heptamer of 7 subunits arranged in a ring. Interacts with the chaperonin GroEL.

Its subcellular location is the cytoplasm. Functionally, together with the chaperonin GroEL, plays an essential role in assisting protein folding. The GroEL-GroES system forms a nano-cage that allows encapsulation of the non-native substrate proteins and provides a physical environment optimized to promote and accelerate protein folding. GroES binds to the apical surface of the GroEL ring, thereby capping the opening of the GroEL channel. This Synechococcus sp. (strain JA-2-3B'a(2-13)) (Cyanobacteria bacterium Yellowstone B-Prime) protein is Co-chaperonin GroES.